The sequence spans 592 residues: Methylenetetrahydrofolate reductase (NADH) 1 (592 aa).

E21 acts as the Proton donor/acceptor in catalysis. Residues 21-26 and 52-53 each bind NAD(+); these read EFFPPK and TW. Residues 52–53, H81, 111–113, Y153, 157–160, D175, and K182 contribute to the FAD site; these read TW, RGD, and HPDV. D113 is a binding site for substrate. Substrate contacts are provided by Q193 and Y285.

The protein belongs to the methylenetetrahydrofolate reductase family. Homodimer. FAD is required as a cofactor.

It catalyses the reaction (6S)-5-methyl-5,6,7,8-tetrahydrofolate + NAD(+) = (6R)-5,10-methylene-5,6,7,8-tetrahydrofolate + NADH + H(+). Its pathway is one-carbon metabolism; tetrahydrofolate interconversion. Plant MTHFRs strongly prefer NADH over NADPH. Not inhibited by methionine or S-adenosylmethionine. Functionally, the probable reversibility of the MTHFR reaction in plants suggests that they can metabolize the methyl group of 5,10-methylenetetrahydrofolate to serine, sugars and starch. The polypeptide is Methylenetetrahydrofolate reductase (NADH) 1 (MTHFR1) (Arabidopsis thaliana (Mouse-ear cress)).